We begin with the raw amino-acid sequence, 1538 residues long: Phenolphthiocerol/phthiocerol polyketide synthase subunit B (1538 aa).

A Ketosynthase family 3 (KS3) domain is found at Ala33–Gln455. Catalysis depends on for beta-ketoacyl synthase activity residues Cys205, His340, and His377. Residues Asp553–His882 form an acyltransferase region. The For malonyltransferase activity role is filled by Ser649. Ser1153–Leu1196 is an NADP(+) binding site. Residues Ser1153–Ser1328 form a beta-ketoacyl reductase region. The Carrier domain occupies Asp1423 to Leu1498. The residue at position 1458 (Ser1458) is an O-(pantetheine 4'-phosphoryl)serine.

The cofactor is NADP(+). Pantetheine 4'-phosphate serves as cofactor.

It carries out the reaction icosanoyl-[(phenol)carboxyphthiodiolenone synthase] + 2 (S)-methylmalonyl-CoA + 3 malonyl-CoA + 5 NADPH + 10 H(+) = C32-carboxyphthiodiolenone-[(phenol)carboxyphthiodiolenone synthase] + 5 CO2 + 5 NADP(+) + 5 CoA + 2 H2O. It catalyses the reaction docosanoyl-[(phenol)carboxyphthiodiolenone synthase] + 2 (S)-methylmalonyl-CoA + 3 malonyl-CoA + 5 NADPH + 10 H(+) = C34-carboxyphthiodiolenone-[(phenol)carboxyphthiodiolenone synthase] + 5 CO2 + 5 NADP(+) + 5 CoA + 2 H2O. The enzyme catalyses 17-(4-hydroxyphenyl)heptadecanoyl-[(phenol)carboxyphthiodiolenone synthase] + 2 (S)-methylmalonyl-CoA + 3 malonyl-CoA + 5 NADPH + 10 H(+) = C35-(phenol)carboxyphthiodiolenone-[(phenol)carboxyphthiodiolenone synthase] + 5 CO2 + 5 NADP(+) + 5 CoA + 2 H2O. The catalysed reaction is 19-(4-hydroxyphenyl)nonadecanoyl-[(phenol)carboxyphthiodiolenone synthase] + 2 (S)-methylmalonyl-CoA + 3 malonyl-CoA + 5 NADPH + 10 H(+) = C37-(phenol)carboxyphthiodiolenone-[(phenol)carboxyphthiodiolenone synthase] + 5 CO2 + 5 NADP(+) + 5 CoA + 2 H2O. Its pathway is lipid metabolism; fatty acid biosynthesis. Its function is as follows. Part of the PpsABCDE complex involved in the biosynthesis of the lipid core common to phthiocerols and phenolphthiocerols by successive additions of malonyl-CoA or methylmalonyl-CoA extender units. PpsA can accept as substrate the activated forms of either icosanoyl (C20), docosanoyl (C22) or lignoceroyl (C24) groups from FadD26, or a (4-hydroxyphenyl)-C17 or (4-hydroxyphenyl)-C19 fatty acyl from FadD29. PpsA initiates the biosynthesis and extends its substrate using a malonyl-CoA extender unit. The PpsB and PpsC proteins add the second and third malonyl-CoA extender units. PpsD adds an (R)-methylmalonyl unit and PpsE adds a second (R)-methylmalonyl unit. The incorporation of the methylmalonyl units results in formation of two branched methyl groups in the elongated product. This is Phenolphthiocerol/phthiocerol polyketide synthase subunit B (ppsB) from Mycobacterium bovis (strain ATCC BAA-935 / AF2122/97).